Reading from the N-terminus, the 545-residue chain is ATP synthase subunit alpha (545 aa).

Residue 173 to 180 participates in ATP binding; the sequence is GDRQTGKS.

Belongs to the ATPase alpha/beta chains family. In terms of assembly, F-type ATPases have 2 components, CF(1) - the catalytic core - and CF(0) - the membrane proton channel. CF(1) has five subunits: alpha(3), beta(3), gamma(1), delta(1), epsilon(1). CF(0) has three main subunits: a(1), b(2) and c(9-12). The alpha and beta chains form an alternating ring which encloses part of the gamma chain. CF(1) is attached to CF(0) by a central stalk formed by the gamma and epsilon chains, while a peripheral stalk is formed by the delta and b chains.

Its subcellular location is the cell membrane. It carries out the reaction ATP + H2O + 4 H(+)(in) = ADP + phosphate + 5 H(+)(out). Its function is as follows. Produces ATP from ADP in the presence of a proton gradient across the membrane. The alpha chain is a regulatory subunit. The sequence is that of ATP synthase subunit alpha from Arthrobacter sp. (strain FB24).